Reading from the N-terminus, the 1683-residue chain is ABC transporter 7 (1683 aa).

Residues 24-44 form a helical membrane-spanning segment; sequence DYLRILLPAVVIGLSVLNLGF. Residues 53-93 form a disordered region; it reads RSKSPSTHAYAPVSNGDNSRPGAHRTDISPDDDAIAQDDED. The span at 81–93 shows a compositional bias: acidic residues; the sequence is SPDDDAIAQDDED. The next 4 helical transmembrane spans lie at 127–147, 157–177, 190–210, and 221–241; these read LSVV…VIAL, TLTG…LATL, HLWN…IGIF, and LAQI…FMAI. The N-linked (GlcNAc...) asparagine glycan is linked to Asn-247. A run of 2 helical transmembrane segments spans residues 336–356 and 368–388; these read GWAV…KAIL and SVVW…SLGD. Positions 338-664 constitute an ABC transmembrane type-1 1 domain; it reads AVMSGMFTFA…LGDMLAHVQE (327 aa). Positions 451-473 are disordered; sequence GDNDESEDGKDGDKDKEDSSDEQ. Residue Asn-489 is glycosylated (N-linked (GlcNAc...) asparagine). 2 helical membrane-spanning segments follow: residues 496-516 and 518-538; these read YLHF…VLLY and VLGM…PVNI. N-linked (GlcNAc...) asparagine glycosylation is present at Asn-545. 2 consecutive transmembrane segments (helical) span residues 602–622 and 632–648; these read VWAC…FFSF and PLHP…FMLL. The 250-residue stretch at 700-949 folds into the ABC transporter 1 domain; that stretch reads IALKDAAFIW…GALGEEIAQK (250 aa). Residue 742 to 749 participates in ATP binding; sequence GPTGSGKT. The interval 952–998 is disordered; the sequence is SETPNISRIPSRVPSSVGEGSGNTLLDTDGDDHLSKPKNAKKAKKAE. Asn-956 carries N-linked (GlcNAc...) asparagine glycosylation. Residues 1016–1036 form a helical membrane-spanning segment; it reads LYLASMGSWWFWVVAGCIFIS. The region spanning 1028–1351 is the ABC transmembrane type-1 2 domain; it reads VVAGCIFISQ…NILWLVRLYS (324 aa). The N-linked (GlcNAc...) asparagine glycan is linked to Asn-1097. 3 consecutive transmembrane segments (helical) span residues 1111–1131, 1182–1202, and 1204–1224; these read AQYY…TAFL, VDQE…GITV, and VVLI…ITIA. N-linked (GlcNAc...) asparagine glycosylation occurs at Asn-1277. Helical transmembrane passes span 1304 to 1324 and 1327 to 1347; these read LLGD…IGVI and GWAG…LWLV. The ABC transporter 2 domain occupies 1392–1649; it reads VEFINYTTSY…GEGGSFKSMC (258 aa). 2 N-linked (GlcNAc...) asparagine glycosylation sites follow: Asn-1396 and Asn-1411. 1426 to 1433 is a binding site for ATP; the sequence is GRTGAGKS. Asn-1541 and Asn-1552 each carry an N-linked (GlcNAc...) asparagine glycan.

It belongs to the ABC transporter superfamily.

It is found in the membrane. Functionally, ABC transporter; part of the gene cluster that mediates the biosynthesis of pyriculol and pyriculariol, two heptaketides that induce lesion formation upon application on rice leaves but are dispensable for pathogenicity. With the MFS transporter MFS1, is most likely responsible for pyriculol and pyriculariol secretion and thereby may contribute to intrinsic resistance. This is ABC transporter 7 from Pyricularia oryzae (strain 70-15 / ATCC MYA-4617 / FGSC 8958) (Rice blast fungus).